Reading from the N-terminus, the 257-residue chain is TLC domain-containing protein 3A (257 aa).

Helical transmembrane passes span 1-21 (MLLTLAGGALFFPGLFALCTW), 42-62 (LVSSVHAVLATGSGIVIIRSC), 77-97 (VWFLIPYMIYDSYAMYLCEWC), 113-135 (FLSRNRLMITHHAVILFVLVPVA), 142-162 (LGDFFVGCIFTAELSTPFVSL), 181-201 (GILTLATFLSCRILLFPFMYW), and 220-240 (FYCNVANAFLVAPQIYWFCLL). Residues 33–249 (TDCVMISTRL…LCRKAVRLFD (217 aa)) enclose the TLC domain.

Interacts with GGT7 isoform 3 and SLC3A2. As to expression, highly expressed in pancreas. Detected at intermediate levels in heart, placenta and kidney, and at low levels in brain, liver and skeletal muscle. Not detected in normal lung.

Its subcellular location is the cell membrane. The polypeptide is TLC domain-containing protein 3A (Homo sapiens (Human)).